A 637-amino-acid chain; its full sequence is tRNA uridine 5-carboxymethylaminomethyl modification enzyme MnmG (637 aa).

An FAD-binding site is contributed by 18–23; it reads GAGHAG. NAD(+) is bound at residue 282–296; sequence GPRYCPSIEDKIVRF.

The protein belongs to the MnmG family. As to quaternary structure, homodimer. Heterotetramer of two MnmE and two MnmG subunits. The cofactor is FAD.

It is found in the cytoplasm. In terms of biological role, NAD-binding protein involved in the addition of a carboxymethylaminomethyl (cmnm) group at the wobble position (U34) of certain tRNAs, forming tRNA-cmnm(5)s(2)U34. The sequence is that of tRNA uridine 5-carboxymethylaminomethyl modification enzyme MnmG from Pediococcus pentosaceus (strain ATCC 25745 / CCUG 21536 / LMG 10740 / 183-1w).